The following is an 843-amino-acid chain: Protein P (843 aa).

The terminal protein domain (TP) stretch occupies residues Met1–Gln177. A spacer region spans residues Glu178–Leu346. Disordered stretches follow at residues Gly224 to Ser273 and His288 to Ser316. Positions His288–Gly299 are enriched in polar residues. The segment at Glu347–Gln690 is polymerase/reverse transcriptase domain (RT). Positions Glu357–Ile600 constitute a Reverse transcriptase domain. 3 residues coordinate Mg(2+): Asp429, Asp551, and Asp552.

This sequence belongs to the hepadnaviridae P protein family.

The catalysed reaction is DNA(n) + a 2'-deoxyribonucleoside 5'-triphosphate = DNA(n+1) + diphosphate. It carries out the reaction Endonucleolytic cleavage to 5'-phosphomonoester.. Activated by host HSP70 and HSP40 in vitro to be able to bind the epsilon loop of the pgRNA. Because deletion of the RNase H region renders the protein partly chaperone-independent, the chaperones may be needed indirectly to relieve occlusion of the RNA-binding site by this domain. Inhibited by several reverse-transcriptase inhibitors: Lamivudine, Adefovir and Entecavir. Functionally, multifunctional enzyme that converts the viral RNA genome into dsDNA in viral cytoplasmic capsids. This enzyme displays a DNA polymerase activity that can copy either DNA or RNA templates, and a ribonuclease H (RNase H) activity that cleaves the RNA strand of RNA-DNA heteroduplexes in a partially processive 3'- to 5'-endonucleasic mode. Neo-synthesized pregenomic RNA (pgRNA) are encapsidated together with the P protein, and reverse-transcribed inside the nucleocapsid. Initiation of reverse-transcription occurs first by binding the epsilon loop on the pgRNA genome, and is initiated by protein priming, thereby the 5'-end of (-)DNA is covalently linked to P protein. Partial (+)DNA is synthesized from the (-)DNA template and generates the relaxed circular DNA (RC-DNA) genome. After budding and infection, the RC-DNA migrates in the nucleus, and is converted into a plasmid-like covalently closed circular DNA (cccDNA). The activity of P protein does not seem to be necessary for cccDNA generation, and is presumably released from (+)DNA by host nuclear DNA repair machinery. This chain is Protein P, found in Homo sapiens (Human).